The primary structure comprises 289 residues: Nucleotide-binding protein LAF_0356 (289 aa).

Residue 12 to 19 (GMSGAGKT) participates in ATP binding. 62–65 (DSRS) serves as a coordination point for GTP.

The protein belongs to the RapZ-like family.

Its function is as follows. Displays ATPase and GTPase activities. The polypeptide is Nucleotide-binding protein LAF_0356 (Limosilactobacillus fermentum (strain NBRC 3956 / LMG 18251) (Lactobacillus fermentum)).